The following is a 353-amino-acid chain: Protein RecA (353 aa).

75 to 82 (GPESSGKT) contributes to the ATP binding site.

The protein belongs to the RecA family.

The protein localises to the cytoplasm. Functionally, can catalyze the hydrolysis of ATP in the presence of single-stranded DNA, the ATP-dependent uptake of single-stranded DNA by duplex DNA, and the ATP-dependent hybridization of homologous single-stranded DNAs. It interacts with LexA causing its activation and leading to its autocatalytic cleavage. This chain is Protein RecA, found in Cupriavidus necator (Alcaligenes eutrophus).